A 226-amino-acid chain; its full sequence is Octanoyltransferase (226 aa).

The BPL/LPL catalytic domain occupies 31 to 226 (PETPDALWIC…SQKLGTYLAP (196 aa)). Substrate contacts are provided by residues 70-77 (RGGQVTFH), 159-161 (ALG), and 172-174 (GVA). The Acyl-thioester intermediate role is filled by Cys190.

Belongs to the LipB family.

It localises to the cytoplasm. The catalysed reaction is octanoyl-[ACP] + L-lysyl-[protein] = N(6)-octanoyl-L-lysyl-[protein] + holo-[ACP] + H(+). Its pathway is protein modification; protein lipoylation via endogenous pathway; protein N(6)-(lipoyl)lysine from octanoyl-[acyl-carrier-protein]: step 1/2. In terms of biological role, catalyzes the transfer of endogenously produced octanoic acid from octanoyl-acyl-carrier-protein onto the lipoyl domains of lipoate-dependent enzymes. Lipoyl-ACP can also act as a substrate although octanoyl-ACP is likely to be the physiological substrate. This is Octanoyltransferase from Variovorax paradoxus (strain S110).